We begin with the raw amino-acid sequence, 319 residues long: MDYGFATRAIHAGQDPESVTGAVIVPIYQTSTYAQRGVGDHTGYEYSRTDNPTRTALQTCLAALEEAKHALVFASGLGASTTLMLMLKAGDHVICGDDVYGGTYRLFQRVMTEHGLSFDFIDMADPEAVRAAIKPNTRLIWLETPTNPLLKLAPIAAITRVAREHGIWTIVDNTFASPYNQRPITLGADMVLHSTTKYIGGHSDVVGGAIMTSNDELYEKLKFLQNAAGAVPGPFDCWLVLRGVKTLSIRMRDDERNALAIAQFLTEHPGVEKVIYPGLPSHPQHNLAREQMRGFGGMISILLKGGAEAANAMVSKTKL.

Residue lysine 197 is modified to N6-(pyridoxal phosphate)lysine.

The protein belongs to the trans-sulfuration enzymes family. In terms of assembly, homotetramer. Pyridoxal 5'-phosphate is required as a cofactor.

The protein resides in the cytoplasm. The enzyme catalyses O-succinyl-L-homoserine + L-cysteine = L,L-cystathionine + succinate + H(+). Its function is as follows. Catalyzes the formation of L-cystathionine from O-succinyl-L-homoserine (OSHS) and L-cysteine, via a gamma-replacement reaction. In the absence of thiol, catalyzes gamma-elimination to form 2-oxobutanoate, succinate and ammonia. The polypeptide is Probable cystathionine gamma-synthase (metB) (Herpetosiphon aurantiacus (Herpetosiphon giganteus)).